The primary structure comprises 306 residues: Protein FdhE homolog (306 aa).

Belongs to the FdhE family.

The protein localises to the cytoplasm. Functionally, necessary for formate dehydrogenase activity. This chain is Protein FdhE homolog, found in Glaesserella parasuis serovar 5 (strain SH0165) (Haemophilus parasuis).